The chain runs to 77 residues: ATP synthase subunit c (77 aa).

The next 2 membrane-spanning stretches (helical) occupy residues 7-27 (AFKYLAASIAAGLAALAAALG) and 57-77 (VGLIEAVPILAIVVAFLILFL).

It belongs to the ATPase C chain family. F-type ATPases have 2 components, F(1) - the catalytic core - and F(0) - the membrane proton channel. F(1) has five subunits: alpha(3), beta(3), gamma(1), delta(1), epsilon(1). F(0) has three main subunits: a(1), b(2) and c(10-14). The alpha and beta chains form an alternating ring which encloses part of the gamma chain. F(1) is attached to F(0) by a central stalk formed by the gamma and epsilon chains, while a peripheral stalk is formed by the delta and b chains.

The protein resides in the cell membrane. In terms of biological role, f(1)F(0) ATP synthase produces ATP from ADP in the presence of a proton or sodium gradient. F-type ATPases consist of two structural domains, F(1) containing the extramembraneous catalytic core and F(0) containing the membrane proton channel, linked together by a central stalk and a peripheral stalk. During catalysis, ATP synthesis in the catalytic domain of F(1) is coupled via a rotary mechanism of the central stalk subunits to proton translocation. Functionally, key component of the F(0) channel; it plays a direct role in translocation across the membrane. A homomeric c-ring of between 10-14 subunits forms the central stalk rotor element with the F(1) delta and epsilon subunits. This chain is ATP synthase subunit c, found in Lactobacillus helveticus (strain DPC 4571).